The following is a 467-amino-acid chain: Retinoic acid receptor RXR-alpha (467 aa).

The interval M1–S61 is disordered. Residues M1 to I139 are modulating. A Glycyl lysine isopeptide (Lys-Gly) (interchain with G-Cter in SUMO2) cross-link involves residue K4. Residues S22 and S28 each carry the phosphoserine modification. The span at P32–P55 shows a compositional bias: low complexity. S61 and S75 each carry phosphoserine; by MAPK8 and MAPK9. The tract at residues P79–S109 is disordered. Over residues S83–S109 the composition is skewed to polar residues. At T87 the chain carries Phosphothreonine; by MAPK8 and MAPK9. Residue K113 forms a Glycyl lysine isopeptide (Lys-Gly) (interchain with G-Cter in SUMO) linkage. The residue at position 134 (S134) is a Phosphoserine. C140 and C143 together coordinate Zn(2+). The NR C4-type zinc finger occupies C140–C160. Positions C140 to M205 form a DNA-binding region, nuclear receptor. The residue at position 150 (K150) is an N6-acetyllysine. 2 residues coordinate Zn(2+): C157 and C160. The tract at residues K165–K170 is nuclear localization signal. Residues C176, C182, C192, and C195 each contribute to the Zn(2+) site. The segment at C176–C200 adopts an NR C4-type zinc-finger fold. Residues K206–S229 are hinge. Residues Q211 to N223 show a composition bias toward basic and acidic residues. Residues Q211 to E233 are disordered. Residues N232–P463 form the NR LBD domain. Position 264 is a phosphoserine (S264). S265 bears the Phosphoserine; by MAPK8 and MAPK9 mark. Residues R321 and A332 each contribute to the 9-cis-retinoate site. All-trans-retinoate is bound by residues R321 and A332. The segment at R353–G373 is required for nuclear export.

This sequence belongs to the nuclear hormone receptor family. NR2 subfamily. Homodimer. Heterodimer (via C-terminus) with RARA; required for ligand-dependent retinoic acid receptor transcriptional activity; association with RARA is enhanced by pulsatile shear stress. Heterodimer with PPARA (via the leucine-like zipper in the LBD); the interaction is required for PPARA transcriptional activity. Heterodimerizes with PPARG. Heterodimerizes (via NR LBD) with RARB. Heterodimerizes with NR1H4; the heterodimerization enhances the binding affinity for LXXLL motifs from coactivators. Interacts with NCOA3 and NCOA6 coactivators. Interacts with FAM120B. Interacts with coactivator PELP1, SENP6, SFPQ, DNTTIP2 and RNF8. Interacts with PRMT2. Interacts with ASXL1. Interacts with BHLHE40/DEC1, BHLHE41/DEC2, MED1, NCOR1 and NCOR2. Interacts in a ligand-dependent fashion with MED1 and NCOA1. Interacts with VDR. Interacts with EP300; the interaction is decreased by 9-cis retinoic acid. Heterodimer (via C-terminus) with NR4A1 (DNA-binding domain); the interaction is enhanced by 9-cis retinoic acid. NR4A1 competes with EP300 for interaction with RXRA and thereby attenuates EP300 mediated acetylation of RXRA. In the absence of hormonal ligand, interacts with TACC1. Interacts ith IGFBP3. Post-translationally, phosphorylated on serine and threonine residues mainly in the N-terminal modulating domain. Constitutively phosphorylated on Ser-22 in the presence or absence of ligand. Under stress conditions, hyperphosphorylated by activated JNK on Ser-61, Ser-75, Thr-87 and Ser-265. Phosphorylated on Ser-28, in vitro, by PKA. This phosphorylation is required for repression of cAMP-mediated transcriptional activity of RARA. In terms of processing, ubiquitinated by UBR5, leading to its degradation: UBR5 specifically recognizes and binds ligand-bound RXRA when it is not associated with coactivators (NCOAs). In presence of NCOAs, the UBR5-degron is not accessible, preventing its ubiquitination and degradation. Sumoylation negatively regulates transcriptional activity. Desumoylated specifically by SENP6. Post-translationally, acetylated by EP300; acetylation enhances DNA binding and transcriptional activity. Expressed in the adrenal gland with main expression in the zona fasciculata and medulla (at protein level). Expressed in aortic endothelial cells, with high expression in the descending thoracic aorta and the outer curvature of the aortic arch, where pulsatory shear stress exists, but very low in the inner curvature of the aortic arch, where oscillatory shear stress prevails (at protein level).

The protein resides in the nucleus. Its subcellular location is the cytoplasm. It is found in the mitochondrion. In terms of biological role, receptor for retinoic acid that acts as a transcription factor. Forms homo- or heterodimers with retinoic acid receptors (RARs) and binds to target response elements in response to their ligands, all-trans or 9-cis retinoic acid, to regulate gene expression in various biological processes. The RAR/RXR heterodimers bind to the retinoic acid response elements (RARE) composed of tandem 5'-AGGTCA-3' sites known as DR1-DR5 to regulate transcription. The high affinity ligand for retinoid X receptors (RXRs) is 9-cis retinoic acid. In the absence of ligand, the RXR-RAR heterodimers associate with a multiprotein complex containing transcription corepressors that induce histone deacetylation, chromatin condensation and transcriptional suppression. On ligand binding, the corepressors dissociate from the receptors and coactivators are recruited leading to transcriptional activation. Serves as a common heterodimeric partner for a number of nuclear receptors, such as RARA, RARB and PPARA. The RXRA/RARB heterodimer can act as a transcriptional repressor or transcriptional activator, depending on the RARE DNA element context. The RXRA/PPARA heterodimer is required for PPARA transcriptional activity on fatty acid oxidation genes such as ACOX1 and the P450 system genes. Together with RARA, positively regulates microRNA-10a expression, thereby inhibiting the GATA6/VCAM1 signaling response to pulsatile shear stress in vascular endothelial cells. Acts as an enhancer of RARA binding to RARE DNA element. May facilitate the nuclear import of heterodimerization partners such as VDR and NR4A1. Promotes myelin debris phagocytosis and remyelination by macrophages. Plays a role in the attenuation of the innate immune system in response to viral infections, possibly by negatively regulating the transcription of antiviral genes such as type I IFN genes. Involved in the regulation of calcium signaling by repressing ITPR2 gene expression, thereby controlling cellular senescence. In Rattus norvegicus (Rat), this protein is Retinoic acid receptor RXR-alpha (Rxra).